Here is a 613-residue protein sequence, read N- to C-terminus: Chaperone protein dnaK (613 aa).

The protein belongs to the heat shock protein 70 family.

The protein resides in the plastid. It is found in the chloroplast. Acts as a chaperone. The polypeptide is Chaperone protein dnaK (Phaeodactylum tricornutum (strain CCAP 1055/1)).